Consider the following 63-residue polypeptide: Large ribosomal subunit protein bL32 (63 aa).

It belongs to the bacterial ribosomal protein bL32 family.

This chain is Large ribosomal subunit protein bL32, found in Lactobacillus delbrueckii subsp. bulgaricus (strain ATCC 11842 / DSM 20081 / BCRC 10696 / JCM 1002 / NBRC 13953 / NCIMB 11778 / NCTC 12712 / WDCM 00102 / Lb 14).